The chain runs to 247 residues: Probable transcriptional regulatory protein PC1_1817 (247 aa).

It belongs to the TACO1 family.

It is found in the cytoplasm. The chain is Probable transcriptional regulatory protein PC1_1817 from Pectobacterium carotovorum subsp. carotovorum (strain PC1).